A 270-amino-acid polypeptide reads, in one-letter code: Glutamate 5-kinase (270 aa).

Lys17 is an ATP binding site. Residues Ser57, Asp144, and Asn160 each contribute to the substrate site. Residues 180 to 181 and 222 to 228 each bind ATP; these read SD and TGGMTSK.

It belongs to the glutamate 5-kinase family.

The protein resides in the cytoplasm. It carries out the reaction L-glutamate + ATP = L-glutamyl 5-phosphate + ADP. Its pathway is amino-acid biosynthesis; L-proline biosynthesis; L-glutamate 5-semialdehyde from L-glutamate: step 1/2. In terms of biological role, catalyzes the transfer of a phosphate group to glutamate to form L-glutamate 5-phosphate. The protein is Glutamate 5-kinase of Lactococcus lactis subsp. lactis (strain IL1403) (Streptococcus lactis).